The sequence spans 658 residues: Methionine--tRNA ligase (658 aa).

The 'HIGH' region signature appears at 9–19; it reads PYANGKAHVGH. Zn(2+) contacts are provided by cysteine 140, cysteine 143, cysteine 152, and cysteine 156. Residues 322-326 carry the 'KMSKS' region motif; the sequence is TFSKS. Lysine 325 contacts ATP. The tRNA-binding domain maps to 558–658; it reads DFQKLDIRIG…KEVEPGTRVC (101 aa).

The protein belongs to the class-I aminoacyl-tRNA synthetase family. MetG type 1 subfamily. Homodimer. It depends on Zn(2+) as a cofactor.

Its subcellular location is the cytoplasm. It carries out the reaction tRNA(Met) + L-methionine + ATP = L-methionyl-tRNA(Met) + AMP + diphosphate. Functionally, is required not only for elongation of protein synthesis but also for the initiation of all mRNA translation through initiator tRNA(fMet) aminoacylation. In Archaeoglobus fulgidus (strain ATCC 49558 / DSM 4304 / JCM 9628 / NBRC 100126 / VC-16), this protein is Methionine--tRNA ligase.